The following is a 216-amino-acid chain: MOB kinase activator-like 1 homolog C (216 aa).

The Zn(2+) site is built by cysteine 78, cysteine 83, histidine 160, and histidine 165.

This sequence belongs to the MOB1/phocein family.

The protein is MOB kinase activator-like 1 homolog C (mobC) of Dictyostelium discoideum (Social amoeba).